Consider the following 80-residue polypeptide: RNA-binding protein Hfq (80 aa).

The region spanning 10–69 (DPFLNTLRREHVPVSIYLVNGIKLQGQIESFDQYVVLLKNTVTQMVYKHAISTVVPARPV) is the Sm domain.

The protein belongs to the Hfq family. As to quaternary structure, homohexamer.

Its function is as follows. RNA chaperone that binds small regulatory RNA (sRNAs) and mRNAs to facilitate mRNA translational regulation in response to envelope stress, environmental stress and changes in metabolite concentrations. Also binds with high specificity to tRNAs. This is RNA-binding protein Hfq from Azoarcus sp. (strain BH72).